A 58-amino-acid chain; its full sequence is SPbeta prophage-derived uncharacterized protein YotN (58 aa).

This is SPbeta prophage-derived uncharacterized protein YotN (yotN) from Bacillus subtilis (strain 168).